Consider the following 450-residue polypeptide: Keratin, type I cytoskeletal 25 (450 aa).

Low complexity predominate over residues 1–11; sequence MSLRLSSASRR. The segment at 1 to 20 is disordered; it reads MSLRLSSASRRSCPRPTTGS. Residues 1 to 78 are head; sequence MSLRLSSASR…VNERGLLSGN (78 aa). Positions 79–114 are coil 1A; sequence EKVTMQNLNDRLASYLDSVHALEEANADLEQKIKGW. The IF rod domain occupies 79-394; that stretch reads EKVTMQNLND…LLIGGDDGAC (316 aa). The tract at residues 115–136 is linker 1; sequence YEKFGPGSCRGLDHDYSRYFPI. The interval 137–228 is coil 1B; the sequence is IDDLKNQIIA…KNHKEEMQVL (92 aa). The interval 229-251 is linker 12; that stretch reads QCAAGGNVNVEMNAAPGVDLTVL. The tract at residues 252–390 is coil 2; sequence LNNMRAEYEA…ETYCLLIGGD (139 aa). The segment at 391-450 is tail; the sequence is DGACKSGGYKSKDYGSGNVGSQVKDPAKAIVVKKVLEEVDQRSKILTTRLHSLEEKSQSN. S442 carries the phosphoserine modification.

The protein belongs to the intermediate filament family. Heterodimer of a type I and a type II keratin. Heterodimer with type II keratin KRT5 leading to the formation of keratin intermediate filament (KIF) network. Interacts with KRT6A to form filaments. In terms of tissue distribution, strongly expressed in skin and scalp, and weak expression observed in thymus and tongue. In the hair follicle, expressed in Henle layer, Huxley layer and in the inner root sheath cuticle of the hair follicle. Expression extends from the bulb region up to the point of differentiation into the three layers. Also present in the medulla of beard hair (at protein level).

It localises to the cytoplasm. In terms of biological role, essential for the proper assembly of type I and type II keratin protein complexes and formation of keratin intermediate filaments in the inner root sheath (irs). Plays a role in the cytoskeleton organization. This Homo sapiens (Human) protein is Keratin, type I cytoskeletal 25.